Consider the following 338-residue polypeptide: MAGSHPYFNQPDSTHPSPPSAPPSLHWYQRCQPSDATSGLLVALLGGGLPAGFVGPLSRMAYQASNLPSLELLIWRCLFHLPIALLLKLRGDPLLGPPDIRSRAFFCALLNILSIGCAYSAVQVVPAGNAATVRKGSSTVCSAVLTLCLESQGLSGYDWCGLLGCILGLIIIVGPGLWTLQEGTTGVYTALGYAEAFLGGRALSLGLLVYRSLHFPSCLPTVAFLSGLVGLLGSVPGLFVLQTPVLPSDLLSWSCVGAVGILALVSFTCVGYAVTKAHPALVCAVLHSEVVVALILQYYMLHETVAPSDIMGAGVALGSIAIITARNLSCERTGKVEE.

The tract at residues 1–24 is disordered; the sequence is MAGSHPYFNQPDSTHPSPPSAPPS. Helical transmembrane passes span 37 to 57, 67 to 87, 105 to 125, 160 to 180, 190 to 210, 221 to 241, 250 to 270, 281 to 301, and 305 to 325; these read TSGL…VGPL, LPSL…ALLL, FFCA…VQVV, CGLL…LWTL, ALGY…LLVY, TVAF…LFVL, LLSW…FTCV, LVCA…YYML, and VAPS…IITA. Residues 49-174 form the EamA 1 domain; it reads LPAGFVGPLS…CILGLIIIVG (126 aa). One can recognise an EamA 2 domain in the interval 272 to 325; the sequence is YAVTKAHPALVCAVLHSEVVVALILQYYMLHETVAPSDIMGAGVALGSIAIITA.

This sequence belongs to the SLC35G solute transporter family.

Its subcellular location is the membrane. The sequence is that of Solute carrier family 35 member G3 (SLC35G3) from Pan paniscus (Pygmy chimpanzee).